We begin with the raw amino-acid sequence, 683 residues long: DNA-directed RNA polymerase subunit beta' (683 aa).

Residues Cys69, Cys71, Cys87, and Cys90 each coordinate Zn(2+). Mg(2+) contacts are provided by Asp489, Asp491, and Asp493.

This sequence belongs to the RNA polymerase beta' chain family. RpoC1 subfamily. In terms of assembly, in plastids the minimal PEP RNA polymerase catalytic core is composed of four subunits: alpha, beta, beta', and beta''. When a (nuclear-encoded) sigma factor is associated with the core the holoenzyme is formed, which can initiate transcription. Mg(2+) serves as cofactor. The cofactor is Zn(2+).

It localises to the plastid. The protein localises to the chloroplast. The catalysed reaction is RNA(n) + a ribonucleoside 5'-triphosphate = RNA(n+1) + diphosphate. DNA-dependent RNA polymerase catalyzes the transcription of DNA into RNA using the four ribonucleoside triphosphates as substrates. This Triticum aestivum (Wheat) protein is DNA-directed RNA polymerase subunit beta'.